We begin with the raw amino-acid sequence, 333 residues long: Transcription initiation factor IIB (333 aa).

Residues 33–64 (EVYRCPICGNDKFIYNYERGEVVCIVCGAVVQ) form a TFIIB-type zinc finger. Zn(2+) contacts are provided by Cys-37, Cys-40, Cys-56, and Cys-59. Repeat copies occupy residues 149–232 (QELE…LREL) and 243–324 (LYIS…ELAK).

Belongs to the TFIIB family.

Stabilizes TBP binding to an archaeal box-A promoter. Also responsible for recruiting RNA polymerase II to the pre-initiation complex (DNA-TBP-TFIIB). In Pyrobaculum neutrophilum (strain DSM 2338 / JCM 9278 / NBRC 100436 / V24Sta) (Thermoproteus neutrophilus), this protein is Transcription initiation factor IIB.